The following is a 129-amino-acid chain: Ribulose bisphosphate carboxylase small subunit (129 aa).

The protein belongs to the RuBisCO small chain family. Heterohexadecamer of 8 large and 8 small subunits.

In terms of biological role, ruBisCO catalyzes two reactions: the carboxylation of D-ribulose 1,5-bisphosphate, the primary event in carbon dioxide fixation, as well as the oxidative fragmentation of the pentose substrate. Both reactions occur simultaneously and in competition at the same active site. Although the small subunit is not catalytic it is essential for maximal activity. The polypeptide is Ribulose bisphosphate carboxylase small subunit (Cereibacter sphaeroides (Rhodobacter sphaeroides)).